Consider the following 140-residue polypeptide: MTSLDQIIDDFAFLDEWEDRYRYVIELGKNLPEMPEVSRTSENKVQGCASQVWLVTHATGDAEDPLLTFEGESDAHIVRGLVAIVLAIFSGKRASEITRIDALDIFGKIGLIEHLSSQRANGLRSMIRRIKSEAEGRLPA.

This sequence belongs to the SufE family.

This is an uncharacterized protein from Rhizobium meliloti (strain 1021) (Ensifer meliloti).